We begin with the raw amino-acid sequence, 373 residues long: Phospho-N-acetylmuramoyl-pentapeptide-transferase (373 aa).

10 consecutive transmembrane segments (helical) span residues 34 to 54, 78 to 98, 100 to 120, 141 to 161, 181 to 201, 212 to 232, 252 to 272, 275 to 295, 301 to 321, and 350 to 370; these read GALF…ISSL, TPTM…LLWA, LANV…AIGF, LGLE…TALS, FMLN…VSAG, GLAI…AYLA, LAVV…FNAP, AIFM…TVAV, IVMA…IIQV, and QVVV…LSTL.

It belongs to the glycosyltransferase 4 family. MraY subfamily. Mg(2+) is required as a cofactor.

Its subcellular location is the cell inner membrane. It catalyses the reaction UDP-N-acetyl-alpha-D-muramoyl-L-alanyl-gamma-D-glutamyl-meso-2,6-diaminopimeloyl-D-alanyl-D-alanine + di-trans,octa-cis-undecaprenyl phosphate = di-trans,octa-cis-undecaprenyl diphospho-N-acetyl-alpha-D-muramoyl-L-alanyl-D-glutamyl-meso-2,6-diaminopimeloyl-D-alanyl-D-alanine + UMP. The protein operates within cell wall biogenesis; peptidoglycan biosynthesis. Its function is as follows. Catalyzes the initial step of the lipid cycle reactions in the biosynthesis of the cell wall peptidoglycan: transfers peptidoglycan precursor phospho-MurNAc-pentapeptide from UDP-MurNAc-pentapeptide onto the lipid carrier undecaprenyl phosphate, yielding undecaprenyl-pyrophosphoryl-MurNAc-pentapeptide, known as lipid I. The sequence is that of Phospho-N-acetylmuramoyl-pentapeptide-transferase from Rhizobium rhizogenes (strain K84 / ATCC BAA-868) (Agrobacterium radiobacter).